The primary structure comprises 122 residues: Large ribosomal subunit protein uL14 (122 aa).

Belongs to the universal ribosomal protein uL14 family. As to quaternary structure, part of the 50S ribosomal subunit. Forms a cluster with proteins L3 and L19. In the 70S ribosome, L14 and L19 interact and together make contacts with the 16S rRNA in bridges B5 and B8.

Binds to 23S rRNA. Forms part of two intersubunit bridges in the 70S ribosome. This chain is Large ribosomal subunit protein uL14, found in Mesomycoplasma hyopneumoniae (strain 232) (Mycoplasma hyopneumoniae).